Reading from the N-terminus, the 519-residue chain is Pleckstrin homology domain-containing family A member 8 (519 aa).

A PH domain is found at 1-93 (MEGVLYKWTN…WLVALGSAKA (93 aa)). A Phosphothreonine modification is found at Thr139. Ser145 is subject to Phosphoserine. At Thr153 the chain carries Phosphothreonine. Positions 274-302 (GEDNLGNHDSSLAQPASDSSSSPPESHWE) are disordered. Residues 282 to 298 (DSSLAQPASDSSSSPPE) show a composition bias toward low complexity. Residues 310 to 519 (TFFSTMNTSF…VHGLESDEVV (210 aa)) form a glycolipid transfer protein homology domain region.

As to quaternary structure, homodimer. Interacts with ARF1; the interaction together with phosphatidylinositol 4-phosphate binding is required for FAPP2 GlcCer transfer ability.

It localises to the golgi apparatus. Its subcellular location is the trans-Golgi network membrane. The protein resides in the membrane. In terms of biological role, cargo transport protein that is required for apical transport from the trans-Golgi network (TGN). Transports AQP2 from the trans-Golgi network (TGN) to sites of AQP2 phosphorylation. Mediates the non-vesicular transport of glucosylceramide (GlcCer) from the trans-Golgi network (TGN) to the plasma membrane and plays a pivotal role in the synthesis of complex glycosphingolipids. Binding of both phosphatidylinositol 4-phosphate (PIP) and ARF1 are essential for the GlcCer transfer ability. Also required for primary cilium formation, possibly by being involved in the transport of raft lipids to the apical membrane, and for membrane tubulation. In Canis lupus familiaris (Dog), this protein is Pleckstrin homology domain-containing family A member 8 (PLEKHA8).